Reading from the N-terminus, the 331-residue chain is Ornithine carbamoyltransferase (331 aa).

Carbamoyl phosphate contacts are provided by residues 55 to 58, glutamine 82, arginine 106, and 133 to 136; these read STRT and HPTQ. L-ornithine contacts are provided by residues asparagine 166, aspartate 230, and 234-235; that span reads SM. Residues 272 to 273 and arginine 317 each bind carbamoyl phosphate; that span reads CL.

It belongs to the aspartate/ornithine carbamoyltransferase superfamily. OTCase family.

The protein localises to the cytoplasm. The catalysed reaction is carbamoyl phosphate + L-ornithine = L-citrulline + phosphate + H(+). It functions in the pathway amino-acid biosynthesis; L-arginine biosynthesis; L-arginine from L-ornithine and carbamoyl phosphate: step 1/3. Functionally, reversibly catalyzes the transfer of the carbamoyl group from carbamoyl phosphate (CP) to the N(epsilon) atom of ornithine (ORN) to produce L-citrulline. The sequence is that of Ornithine carbamoyltransferase (argF) from Neisseria gonorrhoeae.